An 807-amino-acid polypeptide reads, in one-letter code: Leucine--tRNA ligase (807 aa).

The 'HIGH' region signature appears at 40-51 (PYPSGSGLHVGH). Positions 576-580 (KMSKS) match the 'KMSKS' region motif. Lys-579 contacts ATP.

The protein belongs to the class-I aminoacyl-tRNA synthetase family.

The protein localises to the cytoplasm. The catalysed reaction is tRNA(Leu) + L-leucine + ATP = L-leucyl-tRNA(Leu) + AMP + diphosphate. The chain is Leucine--tRNA ligase from Chlorobaculum tepidum (strain ATCC 49652 / DSM 12025 / NBRC 103806 / TLS) (Chlorobium tepidum).